A 511-amino-acid polypeptide reads, in one-letter code: Light-independent protochlorophyllide reductase subunit B (511 aa).

[4Fe-4S] cluster is bound at residue aspartate 36. Aspartate 299 acts as the Proton donor in catalysis. Substrate is bound at residue 434-435; sequence GM.

It belongs to the ChlB/BchB/BchZ family. As to quaternary structure, protochlorophyllide reductase is composed of three subunits; ChlL, ChlN and ChlB. Forms a heterotetramer of two ChlB and two ChlN subunits. [4Fe-4S] cluster serves as cofactor.

Its subcellular location is the plastid. The protein localises to the chloroplast. It carries out the reaction chlorophyllide a + oxidized 2[4Fe-4S]-[ferredoxin] + 2 ADP + 2 phosphate = protochlorophyllide a + reduced 2[4Fe-4S]-[ferredoxin] + 2 ATP + 2 H2O. It participates in porphyrin-containing compound metabolism; chlorophyll biosynthesis (light-independent). Its function is as follows. Component of the dark-operative protochlorophyllide reductase (DPOR) that uses Mg-ATP and reduced ferredoxin to reduce ring D of protochlorophyllide (Pchlide) to form chlorophyllide a (Chlide). This reaction is light-independent. The NB-protein (ChlN-ChlB) is the catalytic component of the complex. This chain is Light-independent protochlorophyllide reductase subunit B, found in Huperzia lucidula (Shining clubmoss).